The chain runs to 482 residues: tRNA sulfurtransferase (482 aa).

Residues 61–165 form the THUMP domain; it reads LTIRDALTRI…DDRLLLIKGR (105 aa). ATP is bound by residues 183–184, lysine 265, glycine 287, and glutamine 296; that span reads LI. Cysteines 344 and 456 form a disulfide. A Rhodanese domain is found at 404 to 482; that stretch reads FGPNDVILDI…GFNNVKVYRP (79 aa). The Cysteine persulfide intermediate role is filled by cysteine 456.

It belongs to the ThiI family.

Its subcellular location is the cytoplasm. It carries out the reaction [ThiI sulfur-carrier protein]-S-sulfanyl-L-cysteine + a uridine in tRNA + 2 reduced [2Fe-2S]-[ferredoxin] + ATP + H(+) = [ThiI sulfur-carrier protein]-L-cysteine + a 4-thiouridine in tRNA + 2 oxidized [2Fe-2S]-[ferredoxin] + AMP + diphosphate. The catalysed reaction is [ThiS sulfur-carrier protein]-C-terminal Gly-Gly-AMP + S-sulfanyl-L-cysteinyl-[cysteine desulfurase] + AH2 = [ThiS sulfur-carrier protein]-C-terminal-Gly-aminoethanethioate + L-cysteinyl-[cysteine desulfurase] + A + AMP + 2 H(+). The protein operates within cofactor biosynthesis; thiamine diphosphate biosynthesis. Functionally, catalyzes the ATP-dependent transfer of a sulfur to tRNA to produce 4-thiouridine in position 8 of tRNAs, which functions as a near-UV photosensor. Also catalyzes the transfer of sulfur to the sulfur carrier protein ThiS, forming ThiS-thiocarboxylate. This is a step in the synthesis of thiazole, in the thiamine biosynthesis pathway. The sulfur is donated as persulfide by IscS. The polypeptide is tRNA sulfurtransferase (Shigella flexneri).